Here is a 169-residue protein sequence, read N- to C-terminus: MICOS complex subunit MIC19 (169 aa).

Residue Gly-2 is the site of N-myristoyl glycine attachment. The CHCH domain occupies Glu-123 to Val-165. 2 short sequence motifs (cx9C motif) span residues Cys-126 to Cys-136 and Cys-147 to Cys-157. Disulfide bonds link Cys-126–Cys-157 and Cys-136–Cys-147.

This sequence belongs to the MICOS complex subunit Mic19 family. Metazoan Mic19 subfamily. In terms of assembly, component of the mitochondrial contact site and cristae organizing system (MICOS) complex.

The protein localises to the mitochondrion inner membrane. Functionally, plays a role in maintaining mitochondrial morphology. May act as a component of the MICOS complex, a large protein complex of the mitochondria. The chain is MICOS complex subunit MIC19 from Caenorhabditis elegans.